A 425-amino-acid chain; its full sequence is Enolase (425 aa).

Glutamine 162 is a binding site for (2R)-2-phosphoglycerate. The active-site Proton donor is glutamate 204. Residues aspartate 241, glutamate 284, and aspartate 311 each coordinate Mg(2+). Residues lysine 336, arginine 365, serine 366, and lysine 387 each coordinate (2R)-2-phosphoglycerate. The active-site Proton acceptor is the lysine 336.

Belongs to the enolase family. It depends on Mg(2+) as a cofactor.

The protein resides in the cytoplasm. It localises to the secreted. The protein localises to the cell surface. The enzyme catalyses (2R)-2-phosphoglycerate = phosphoenolpyruvate + H2O. It functions in the pathway carbohydrate degradation; glycolysis; pyruvate from D-glyceraldehyde 3-phosphate: step 4/5. Functionally, catalyzes the reversible conversion of 2-phosphoglycerate (2-PG) into phosphoenolpyruvate (PEP). It is essential for the degradation of carbohydrates via glycolysis. The polypeptide is Enolase (Brucella anthropi (strain ATCC 49188 / DSM 6882 / CCUG 24695 / JCM 21032 / LMG 3331 / NBRC 15819 / NCTC 12168 / Alc 37) (Ochrobactrum anthropi)).